Here is a 292-residue protein sequence, read N- to C-terminus: UPF0696 protein C11orf68 homolog (292 aa).

The span at 1–10 shows a compositional bias: low complexity; the sequence is MAAAAAAVAG. Residues 1 to 60 form a disordered region; sequence MAAAAAAVAGAGRGGGGGAEPRQERSRARGWAGAERSEGRRMEPGEELEEEDSPGGREDG. Positions 35 to 44 are enriched in basic and acidic residues; it reads ERSEGRRMEP.

This sequence belongs to the UPF0696 family.

The sequence is that of UPF0696 protein C11orf68 homolog from Bos taurus (Bovine).